The following is a 541-amino-acid chain: Glutamyl-tRNA(Gln) amidotransferase subunit B, mitochondrial (541 aa).

This sequence belongs to the GatB/GatE family. GatB subfamily. Subunit of the heterotrimeric GatFAB amidotransferase (AdT) complex, composed of A (HER2), B (PET112) and F (YGR102C) subunits.

It is found in the mitochondrion. The enzyme catalyses L-glutamyl-tRNA(Gln) + L-glutamine + ATP + H2O = L-glutaminyl-tRNA(Gln) + L-glutamate + ADP + phosphate + H(+). Allows the formation of correctly charged Gln-tRNA(Gln) through the transamidation of misacylated Glu-tRNA(Gln) in the mitochondria. The reaction takes place in the presence of glutamine and ATP through an activated gamma-phospho-Glu-tRNA(Gln). The protein is Glutamyl-tRNA(Gln) amidotransferase subunit B, mitochondrial of Saccharomyces cerevisiae (strain ATCC 204508 / S288c) (Baker's yeast).